Here is a 100-residue protein sequence, read N- to C-terminus: A-type ATP synthase subunit F (100 aa).

The protein belongs to the V-ATPase F subunit family. In terms of assembly, has multiple subunits with at least A(3), B(3), C, D, E, F, H, I and proteolipid K(x).

It is found in the cell membrane. Its function is as follows. Component of the A-type ATP synthase that produces ATP from ADP in the presence of a proton gradient across the membrane. This Methanocorpusculum labreanum (strain ATCC 43576 / DSM 4855 / Z) protein is A-type ATP synthase subunit F.